The sequence spans 141 residues: NADPH-dependent 7-cyano-7-deazaguanine reductase (141 aa).

Catalysis depends on C34, which acts as the Thioimide intermediate. The active-site Proton donor is D41. Substrate is bound by residues 56-58 and 75-76; these read VEL and HE.

The protein belongs to the GTP cyclohydrolase I family. QueF type 1 subfamily.

It localises to the cytoplasm. The catalysed reaction is 7-aminomethyl-7-carbaguanine + 2 NADP(+) = 7-cyano-7-deazaguanine + 2 NADPH + 3 H(+). Its pathway is tRNA modification; tRNA-queuosine biosynthesis. Functionally, catalyzes the NADPH-dependent reduction of 7-cyano-7-deazaguanine (preQ0) to 7-aminomethyl-7-deazaguanine (preQ1). In Acidithiobacillus ferrooxidans (strain ATCC 23270 / DSM 14882 / CIP 104768 / NCIMB 8455) (Ferrobacillus ferrooxidans (strain ATCC 23270)), this protein is NADPH-dependent 7-cyano-7-deazaguanine reductase.